The primary structure comprises 318 residues: Homoserine kinase (318 aa).

Residue 97–107 (PIGSGLGSSAC) coordinates ATP.

Belongs to the GHMP kinase family. Homoserine kinase subfamily.

It localises to the cytoplasm. It carries out the reaction L-homoserine + ATP = O-phospho-L-homoserine + ADP + H(+). The protein operates within amino-acid biosynthesis; L-threonine biosynthesis; L-threonine from L-aspartate: step 4/5. In terms of biological role, catalyzes the ATP-dependent phosphorylation of L-homoserine to L-homoserine phosphate. This chain is Homoserine kinase, found in Vibrio vulnificus (strain CMCP6).